The primary structure comprises 353 residues: tRNA U34 carboxymethyltransferase (353 aa).

Carboxy-S-adenosyl-L-methionine is bound by residues K101, W119, K124, G144, 166-168 (DPS), 207-208 (LE), M227, Y231, and R346.

This sequence belongs to the class I-like SAM-binding methyltransferase superfamily. CmoB family. In terms of assembly, homotetramer.

It carries out the reaction carboxy-S-adenosyl-L-methionine + 5-hydroxyuridine(34) in tRNA = 5-carboxymethoxyuridine(34) in tRNA + S-adenosyl-L-homocysteine + H(+). In terms of biological role, catalyzes carboxymethyl transfer from carboxy-S-adenosyl-L-methionine (Cx-SAM) to 5-hydroxyuridine (ho5U) to form 5-carboxymethoxyuridine (cmo5U) at position 34 in tRNAs. In Psychrobacter sp. (strain PRwf-1), this protein is tRNA U34 carboxymethyltransferase.